Consider the following 278-residue polypeptide: Msm operon regulatory protein (278 aa).

The HTH araC/xylS-type domain maps to 176 to 274; the sequence is NQVKKIIHSQ…GKSPSKFRKE (99 aa). 2 consecutive DNA-binding regions (H-T-H motif) follow at residues 193–214 and 241–264; these read NDIA…RKST and IAEI…KNYF.

Regulatory protein for the msm operon for multiple sugar metabolism. Activates the transcription of the msmEFGK, aga, dexB and gftA genes. This is Msm operon regulatory protein (msmR) from Streptococcus mutans serotype c (strain ATCC 700610 / UA159).